Here is a 444-residue protein sequence, read N- to C-terminus: C4-dicarboxylate transport protein (444 aa).

Helical transmembrane passes span Val15 to Ala35, Leu46 to Met66, Tyr78 to Val98, Ile143 to Gly163, Pro199 to Val219, Leu224 to Ala244, Val291 to Leu311, Ile332 to Gly352, and Ile354 to Ile374. Residues Gly422–Lys444 form a disordered region.

Belongs to the dicarboxylate/amino acid:cation symporter (DAACS) (TC 2.A.23) family.

The protein localises to the cell inner membrane. Its function is as follows. Responsible for the transport of dicarboxylates such as succinate, fumarate, and malate from the periplasm across the membrane. The protein is C4-dicarboxylate transport protein of Pseudomonas fluorescens (strain Pf0-1).